The sequence spans 1175 residues: MEGSLLVASSASNNETANNVESTDGATRRISFAKIHEPLDVPNLLALQTESFDWLVGNGRWQDRMQKAVDAGDESVATTSGLSDIFEEISPIEDFQGTMSLSFSEPEFADPKYTMAECKDRDATFSAPLYVKAEFMNNNTGEIKQQTVFMGDFPLMTEKGTFVINGTERVVVSQLVRSPGAYFERTADKTSDKDIFTAKIIPSRGAWFELEIDKRDQVGVRLDRKRKQSVTVLLKALGWTESQILEEFGEFDSIRATLEKDGTSTREDALLDIYRKLRPGEPPTVEAAQTLLDNLYFNPKRYDLAKVGRYKINRKLGIDKSLASPDASVLDINDIVAIIKFLVTLHAGGKSLTAKRDGKDFELRVDVDDIDHFGNRRIRAVGELIENQVRTGLSRMERVVRERMTTQDVEAITPQTLINIRPVVAAIKEFFGTSQLSQFMDQNNPLAGLTHKRRLSALGPGGLSRDRAGYEVRDVHPSHYGRMCPIETPEGPNIGLIGSLASYGRINPLGFIETPYRKVSKGHVSDEVDYLTADDELNYIIAQANAPLDSKSSFVEDQVLVRQRGGGGEPVLVAADDVEYMDVSPRQMVSVATALIPFLEHDDANRALMGANMQRQAVPLVRSEAPVVGTGMERAAAVDAGDVVIAKKAGVVTEVSADLVIMLNDDGTETNYRIAKYNRSNQGTAYNQRVLVSEGARLEVGGIIADGPATDQGELALGKNLLVAFMSWEGHNFEDAIILSQRLVSEDVLSSIHIEEHEIDARDTKLGAEEITRDIPNVSEEILAGLDERGIIHIGAEVDAGDILVGKVTPKGETELTPEERLLRAIFGDKSGEVRDTSLKVPHGESGTVIGVRFFDRENDDDLAPGVNQLVRIYVAAKRKITNGDKLAGRHGNKGVISKILPIEDMPFLADGTPVDIVLNPLGVPGRMNVGQVLELHLGWIAKTGWKIDGEPDWVKNLPNLPRETGRDQILATPVFDGAREEEISGLLDSTNVTRDGDLLINRSGKTRLFDGRSGEPFPDPISVGYMYILKLHHLVDDKIHARSTGPYSMITQQPLGGKAQFGGQRFGEMEVWALEAYGAAYTLQELLTIKSDDIHGRVKVYEAIVKGENIPEPGIPESFKVLIKEMRSLCLNVEVLSTEGSTIEMRDSDEEVFRAAEELGIDLSRAEPNSVEEV.

The segment at M1 to D24 is disordered. A compositionally biased stretch (low complexity) spans V7–T23.

It belongs to the RNA polymerase beta chain family. As to quaternary structure, the RNAP catalytic core consists of 2 alpha, 1 beta, 1 beta' and 1 omega subunit. When a sigma factor is associated with the core the holoenzyme is formed, which can initiate transcription.

It carries out the reaction RNA(n) + a ribonucleoside 5'-triphosphate = RNA(n+1) + diphosphate. DNA-dependent RNA polymerase catalyzes the transcription of DNA into RNA using the four ribonucleoside triphosphates as substrates. This is DNA-directed RNA polymerase subunit beta from Renibacterium salmoninarum (strain ATCC 33209 / DSM 20767 / JCM 11484 / NBRC 15589 / NCIMB 2235).